The chain runs to 173 residues: Mitochondrial holo-[acyl-carrier-protein] synthase (173 aa).

The protein belongs to the P-Pant transferase superfamily. AcpS family.

It is found in the mitochondrion. The enzyme catalyses apo-[ACP] + CoA = holo-[ACP] + adenosine 3',5'-bisphosphate + H(+). Transfers the 4'-phosphopantetheine moiety from coenzyme A to a Ser of mitochondrial acyl-carrier-protein. The protein is Mitochondrial holo-[acyl-carrier-protein] synthase (PPT2) of Saccharomyces cerevisiae (strain ATCC 204508 / S288c) (Baker's yeast).